Reading from the N-terminus, the 772-residue chain is Ion-translocating oxidoreductase complex subunit C (772 aa).

4Fe-4S ferredoxin-type domains are found at residues 369–397 (GEPQ…QQLY) and 407–436 (KATT…VQYF). [4Fe-4S] cluster is bound by residues Cys-377, Cys-380, Cys-383, Cys-387, Cys-416, Cys-419, Cys-422, and Cys-426. The interval 599–748 (KARKLEQQQA…EPEEQVDPRK (150 aa)) is disordered.

Belongs to the 4Fe4S bacterial-type ferredoxin family. RnfC subfamily. In terms of assembly, the complex is composed of six subunits: RsxA, RsxB, RsxC, RsxD, RsxE and RsxG. The cofactor is [4Fe-4S] cluster.

The protein resides in the cell inner membrane. Part of a membrane-bound complex that couples electron transfer with translocation of ions across the membrane. Required to maintain the reduced state of SoxR. This chain is Ion-translocating oxidoreductase complex subunit C, found in Shigella dysenteriae serotype 1 (strain Sd197).